A 421-amino-acid polypeptide reads, in one-letter code: MKLLVVGSGGREHAIAKKLLASKGVDQVFVAPGNDGMTLDGLDLVNIVVSEHSRLIAFAKENEISWAFIGPDDALAAGIVDDFNSAGLRAFGPTKAAAELEWSKDFAKEIMVKYNVPTAAYGTFSDFEKAKAYIEEQGAPIVVKADGLALGKGVVVAETVEQAVEAAQEMLLDNKFGDSGARVVIEEFLDGEEFSLFAFVNGDKFYIMPTAQDHKRAFDGDKGPNTGGMGAYAPVPHLPQSVVDTAVETIVRPVLEGMVAEGRPYLGVLYVGLILTADGPKVIEFNLRFGDPETQIILPRLTSDFAQNIDDIMMGIEPYITWQNDGVTLGVVVASEGYPLDYEKGVPLPEKTDGDIITYYAGAKFAENSKALLSNGGRVYMLVTTEDSVKAGQDKIYTQLAQQDTTGLFYRNDIGSKAIRE.

In terms of domain architecture, ATP-grasp spans 108 to 314; the sequence is KEIMVKYNVP…FAQNIDDIMM (207 aa). 134–195 provides a ligand contact to ATP; the sequence is IEEQGAPIVV…EEFLDGEEFS (62 aa). Positions 284 and 286 each coordinate Mg(2+).

Belongs to the GARS family. The cofactor is Mg(2+). Mn(2+) is required as a cofactor.

The enzyme catalyses 5-phospho-beta-D-ribosylamine + glycine + ATP = N(1)-(5-phospho-beta-D-ribosyl)glycinamide + ADP + phosphate + H(+). It participates in purine metabolism; IMP biosynthesis via de novo pathway; N(1)-(5-phospho-D-ribosyl)glycinamide from 5-phospho-alpha-D-ribose 1-diphosphate: step 2/2. The polypeptide is Phosphoribosylamine--glycine ligase (Streptococcus pyogenes serotype M18 (strain MGAS8232)).